The chain runs to 117 residues: Immunoglobulin heavy variable 1-24 (117 aa).

A signal peptide spans 1–19 (MDCTWRILFLVAAATGTHA). The segment at 20–44 (QVQLVQSGAEVKKPGASVKVSCKVS) is framework-1. The region spanning 20–117 (QVQLVQSGAE…EDTAVYYCAT (98 aa)) is the Ig-like domain. The cysteines at positions 41 and 115 are disulfide-linked. Residues 45–52 (GYTLTELS) form a complementarity-determining-1 region. A framework-2 region spans residues 53–69 (MHWVRQAPGKGLEWMGG). Residues 70-77 (FDPEDGET) are complementarity-determining-2. Positions 78–115 (IYAQKFQGRVTMTEDTSTDTAYMELSSLRSEDTAVYYC) are framework-3. Positions 116–117 (AT) are complementarity-determining-3.

Immunoglobulins are composed of two identical heavy chains and two identical light chains; disulfide-linked.

The protein localises to the secreted. It localises to the cell membrane. V region of the variable domain of immunoglobulin heavy chains that participates in the antigen recognition. Immunoglobulins, also known as antibodies, are membrane-bound or secreted glycoproteins produced by B lymphocytes. In the recognition phase of humoral immunity, the membrane-bound immunoglobulins serve as receptors which, upon binding of a specific antigen, trigger the clonal expansion and differentiation of B lymphocytes into immunoglobulins-secreting plasma cells. Secreted immunoglobulins mediate the effector phase of humoral immunity, which results in the elimination of bound antigens. The antigen binding site is formed by the variable domain of one heavy chain, together with that of its associated light chain. Thus, each immunoglobulin has two antigen binding sites with remarkable affinity for a particular antigen. The variable domains are assembled by a process called V-(D)-J rearrangement and can then be subjected to somatic hypermutations which, after exposure to antigen and selection, allow affinity maturation for a particular antigen. This chain is Immunoglobulin heavy variable 1-24, found in Homo sapiens (Human).